We begin with the raw amino-acid sequence, 245 residues long: Pyridoxine 5'-phosphate synthase (245 aa).

Asn7 serves as a coordination point for 3-amino-2-oxopropyl phosphate. 9 to 10 is a 1-deoxy-D-xylulose 5-phosphate binding site; sequence DH. Position 18 (Arg18) interacts with 3-amino-2-oxopropyl phosphate. His43 serves as the catalytic Proton acceptor. 1-deoxy-D-xylulose 5-phosphate contacts are provided by Arg45 and His50. The Proton acceptor role is filled by Glu70. Thr100 provides a ligand contact to 1-deoxy-D-xylulose 5-phosphate. His190 serves as the catalytic Proton donor. 3-amino-2-oxopropyl phosphate is bound by residues Gly191 and 212–213; that span reads GH.

Belongs to the PNP synthase family. Homooctamer; tetramer of dimers.

The protein localises to the cytoplasm. It carries out the reaction 3-amino-2-oxopropyl phosphate + 1-deoxy-D-xylulose 5-phosphate = pyridoxine 5'-phosphate + phosphate + 2 H2O + H(+). It functions in the pathway cofactor biosynthesis; pyridoxine 5'-phosphate biosynthesis; pyridoxine 5'-phosphate from D-erythrose 4-phosphate: step 5/5. Functionally, catalyzes the complicated ring closure reaction between the two acyclic compounds 1-deoxy-D-xylulose-5-phosphate (DXP) and 3-amino-2-oxopropyl phosphate (1-amino-acetone-3-phosphate or AAP) to form pyridoxine 5'-phosphate (PNP) and inorganic phosphate. This Prochlorococcus marinus (strain NATL2A) protein is Pyridoxine 5'-phosphate synthase.